Consider the following 496-residue polypeptide: Cytochrome P450 71AV8 (496 aa).

Residues 3–23 traverse the membrane as a helical segment; that stretch reads ISIPTTLGLAVIIFIIFKLLT. Heme is bound at residue C432.

Belongs to the cytochrome P450 family. Heme is required as a cofactor.

It localises to the membrane. Its function is as follows. Valencene oxidase, which preferentially hydroylates the C2 position of (+)-valencene in the trans-orientation, producing trans-nootkatol that can be further oxidized to (+)-nootkatone. Can also catalyze the three-step conversion of germacrene A to germacra-1(10),4,11(13)-trien-12-oic acid and the partial conversion of the non-natural substrate amorpha-4,11-diene into artemisinic alcohol and artemisinic aldehyde. This is Cytochrome P450 71AV8 (CYP71AV8) from Cichorium intybus (Chicory).